We begin with the raw amino-acid sequence, 351 residues long: GTPase Obg (351 aa).

The 159-residue stretch at 1 to 159 (MKFLDQCKIY…RWVWLRLKLI (159 aa)) folds into the Obg domain. In terms of domain architecture, OBG-type G spans 160–327 (ADAGLVGLPN…MLFELLRHIR (168 aa)). GTP is bound by residues 166–173 (GLPNAGKS), 191–195 (FTTLT), 212–215 (DIPG), 279–282 (NKID), and 308–310 (SGA). 2 residues coordinate Mg(2+): Ser173 and Thr193.

This sequence belongs to the TRAFAC class OBG-HflX-like GTPase superfamily. OBG GTPase family. In terms of assembly, monomer. Mg(2+) is required as a cofactor.

The protein localises to the cytoplasm. An essential GTPase which binds GTP, GDP and possibly (p)ppGpp with moderate affinity, with high nucleotide exchange rates and a fairly low GTP hydrolysis rate. Plays a role in control of the cell cycle, stress response, ribosome biogenesis and in those bacteria that undergo differentiation, in morphogenesis control. In Rhodospirillum centenum (strain ATCC 51521 / SW), this protein is GTPase Obg.